A 34-amino-acid chain; its full sequence is Cycloamanide E proprotein (34 aa).

Positions 1-10 are excised as a propeptide; sequence MSDINAARLP. A cross-link (cyclopeptide (Ser-Pro)) is located at residues 11–17; the sequence is SFFFPVP. The propeptide occupies 18-34; that stretch reads CISDDIEMVLTRGESLC.

The protein belongs to the MSDIN fungal toxin family. Post-translationally, processed by the macrocyclase-peptidase enzyme POPB to yield a cyclic decapeptide. POPB first removes 10 residues from the N-terminus. Conformational trapping of the remaining peptide forces the enzyme to release this intermediate rather than proceed to macrocyclization. The enzyme rebinds the remaining peptide in a different conformation and catalyzes macrocyclization of the N-terminal 7 residues.

Functionally, cyclic heptapeptide that belongs to the MSDIN-like toxin family responsible for a large number of food poisoning cases and deaths. Cycloaminide E is structurally related to other cycloamanides that are non-toxic to mammals but show immunosuppressive activity. This chain is Cycloamanide E proprotein, found in Amanita phalloides (Death cap).